Reading from the N-terminus, the 215-residue chain is MLGEIQDKVYKGTTTVGLVCKDGVVLATEKRATMGNFIASRRAKKIYRIADRVAMTTAGAVGDAQFLARLISVEIKLYEIRKEEKPTVKAIATLLSNILNSVRWFPYFVQLLVGGVDKRGPSIYSIDLLGGAIEEIDIVATGSGSPTAYGVLEDRYTPEITVDDGVELAVRAIYSAMRRDSASGDGIDVVKITKDGYFELSKEEVDKILSSLRRA.

Positions 1-12 (MLGEIQDKVYKG) are cleaved as a propeptide — removed in mature form; by autocatalysis. Thr13 serves as the catalytic Nucleophile.

It belongs to the peptidase T1B family. The 20S proteasome core is composed of 14 alpha and 14 beta subunits that assemble into four stacked heptameric rings, resulting in a barrel-shaped structure. The two inner rings, each composed of seven catalytic beta subunits, are sandwiched by two outer rings, each composed of seven alpha subunits. The catalytic chamber with the active sites is on the inside of the barrel. Has a gated structure, the ends of the cylinder being occluded by the N-termini of the alpha-subunits. Is capped at one or both ends by the proteasome regulatory ATPase, PAN.

It localises to the cytoplasm. The enzyme catalyses Cleavage of peptide bonds with very broad specificity.. With respect to regulation, the formation of the proteasomal ATPase PAN-20S proteasome complex, via the docking of the C-termini of PAN into the intersubunit pockets in the alpha-rings, triggers opening of the gate for substrate entry. Interconversion between the open-gate and close-gate conformations leads to a dynamic regulation of the 20S proteasome proteolysis activity. Its function is as follows. Component of the proteasome core, a large protease complex with broad specificity involved in protein degradation. This is Proteasome subunit beta from Archaeoglobus profundus (strain DSM 5631 / JCM 9629 / NBRC 100127 / Av18).